Consider the following 294-residue polypeptide: Small ribosomal subunit protein uS2 (294 aa).

Residues 261 to 274 (MDEDADSKKSKAEE) show a composition bias toward basic and acidic residues. A disordered region spans residues 261 to 294 (MDEDADSKKSKAEEPVIPTAEEPAITTIEVDQNE).

The protein belongs to the universal ribosomal protein uS2 family.

This Leptospira borgpetersenii serovar Hardjo-bovis (strain JB197) protein is Small ribosomal subunit protein uS2.